We begin with the raw amino-acid sequence, 3931 residues long: Replicase polyprotein 1ab (3931 aa).

The segment at 8-28 (CTCTPNARVFVAEGQVYCTRC) adopts a C4-type; atypical zinc-finger fold. Residues 69 to 182 (ECSPAGACWL…FCPFECAMAD (114 aa)) form a PCP1-alpha region. Residues Cys76 and His146 each act as for nsp1-alpha papain-like cysteine proteinase activity in the active site. The important for host EIF2AK2 inhibition stretch occupies residues 199–200 (VS). Catalysis depends on for nsp1-beta papain-like cysteine proteinase activity residues Cys270 and His339. The OTU-like stretch occupies residues 426–513 (LKRYSPPAEG…GEHWTVSVIP (88 aa)). Residues 428 to 536 (RYSPPAEGNC…GCCEHKGGLV (109 aa)) form the Peptidase C33 domain. Active-site for nsp2 cysteine proteinase activity residues include Cys437 and His506. 2 disordered regions span residues 809 to 868 (RWTP…VGGP) and 1118 to 1164 (TDEL…TGGV). A compositionally biased stretch (pro residues) spans 810–819 (WTPPPPPPRV). Basic and acidic residues predominate over residues 1139-1151 (PAKDPRMSPRESD). The next 3 membrane-spanning stretches (helical) occupy residues 1221–1241 (SGYS…LFLC), 1266–1286 (GVFG…SDPV), and 1339–1359 (WHFL…AYVL). The interval 1236-1359 (FCLFLCYSYP…DCILAGAYVL (124 aa)) is HD1. The tract at residues 1414–1438 (TGWRGCWTGRSPIEQPSEKPIAFAQ) is WCCH. Helical transmembrane passes span 1554-1574 (IAAL…VYVT), 1607-1627 (LCIS…GFGL), 1629-1649 (EIAL…RLSC), 1659-1679 (AIAS…PCWL), and 1695-1715 (FLIS…VSLW). Residues 1554–1715 (IAALHVACSM…LAVVLLVSLW (162 aa)) form an HD2 region. Catalysis depends on charge relay system; for serine protease nsp4 activity residues His1818, Asp1843, and Ser1897. 4 helical membrane passes run 2006–2026 (WTPL…AVLV), 2030–2050 (FSFG…VLMI), 2064–2084 (LGFY…VTQG), and 2107–2127 (SPVP…LYLF). The HD3 stretch occupies residues 2006-2127 (WTPLVAVGFF…HLLAIILYLF (122 aa)).

Belongs to the arteriviridae polyprotein family. As to quaternary structure, nsp1-alpha papain-like: Interacts with host RNF31. In terms of assembly, interacts with host EIF2AK2; this interaction occurs in host stress granules and leads to EIF2AK2 inhibition. Interacts with host G3BP1; this interaction probably plays a role in Nsp1-beta-mediated inhibition of host EIF2AK2. Interacts with host DDX18; this interaction redistributes host DDX18 to the cytoplasm. As to quaternary structure, interacts with host IFITM1. In terms of assembly, interacts with host DDX5. Interacts with host OTULIN. As to quaternary structure, interacts with host LGALS3. Specific enzymatic cleavages in vivo by its own proteases yield mature proteins. Nsp1 is autocleaved into two subunits, Nsp1-alpha and Nsp1-beta. There are two alternative pathways for processing. Either nsp4-5 is cleaved, which represents the major pathway or the nsp5-6 and nsp6-7 are processed, which represents the minor pathway. The major pathway occurs when nsp2 acts as a cofactor for nsp4.

Its subcellular location is the host nucleus. It localises to the host cytoplasm. The protein resides in the host membrane. The protein localises to the host endoplasmic reticulum. It is found in the host perinuclear region. The enzyme catalyses RNA(n) + a ribonucleoside 5'-triphosphate = RNA(n+1) + diphosphate. The catalysed reaction is ATP + H2O = ADP + phosphate + H(+). It carries out the reaction Thiol-dependent hydrolysis of ester, thioester, amide, peptide and isopeptide bonds formed by the C-terminal Gly of ubiquitin (a 76-residue protein attached to proteins as an intracellular targeting signal).. It catalyses the reaction uridylyl-uridylyl-ribonucleotide-RNA = a 3'-end uridylyl-2',3'-cyclophospho-uridine-RNA + a 5'-end dephospho-ribonucleoside-RNA. Contains the activities necessary for the transcription of negative stranded RNA, leader RNA, subgenomic mRNAs and progeny virion RNA as well as proteinases responsible for the cleavage of the polyprotein into functional products. In terms of biological role, inhibits host IFN-beta production. Plays a role in the degradation of the host transcriptional activator CREBBP protein. The degradation of host CREBBP which is a key component of the IFN enhanceosome is likely responsible for the inhibition of interferon mediated by Nsp1-alpha. Also participates in the inhibition of host NF-kappa-B activation by counteracting LUBAC-dependent induction of NF-kappa-B. Reduces host NEMO ubiquitination by blocking the interaction between the two LUBAC complex components RNF31 and SHARPIN. Functionally, plays a role in blocking host mRNA nuclear export to the cytoplasm and subversion of host protein synthesis. Additionally, inhibits the interferon-activated JAK/STAT signal transduction by mediating the ubiquitination and subsequent proteasomal degradation of host KPNA1. Repurposes the host antiviral stress granules into a proviral platform to counteract the EIF2AK2/PKR restriction, thereby regulating the host inflammatory response. Its function is as follows. Multifunctional protein that acts as a viral protease and as a viral antagonist of host immune response. Cleaves the nsp2/nsp3 site in the viral polyprotein. Displays deubiquitinating activity that cleaves both ubiquitinated and ISGylated products and therefore inhibits ubiquitin and ISG15-dependent host innate immunity. Also deubiquinates host NFKBIA, thereby interfering with NFKBIA degradation and impairing subsequent NF-kappa-B activation. Plays a role in the inhibition of the immune response by interacting with host IFITM1. This interaction leads to the proteasomal degradation of the IFN-induced antiviral protein IFITM1. In terms of biological role, cleaves the majority of cleavage sites present in the C-terminus of the polyprotein. Triggers host apoptosis through caspase-3, -8, and -9 activations. Subverts host innate immune responses through its protease activity. Targets the NF-kappa-B essential modulator NEMO and mediates its cleavage. Blocks host interferon beta induction and downstream signaling by cleaving mitochondrial MAVS, dislodging it from the mitochondria. Impairs host defense by cleaving host mRNA-decapping enzyme DCP1A to attenuate its antiviral activity. Functionally, plays a role in the initial induction of autophagosomes from host endoplasmic reticulum. Its function is as follows. Plays a role in the inhibition of host STAT3 signaling pathway by inducing the degradation of STAT3. Responsible for replication and transcription of the viral RNA genome. In terms of biological role, displays RNA and DNA duplex-unwinding activities with 5' to 3' polarity. Functionally, plays a role in viral transcription/replication and prevents the simultaneous activation of host cell dsRNA sensors, such as MDA5/IFIH1, OAS, PKR and NLRP3 inflammasome. Acts by degrading the 5'-polyuridines generated during replication of the poly(A) region of viral genomic and subgenomic RNAs. Catalyzes a two-step reaction in which a 2'3'-cyclic phosphate (2'3'-cP) is first generated by 2'-O transesterification, which is then hydrolyzed to a 3'-phosphate (3'-P). If not degraded, poly(U) RNA would hybridize with poly(A) RNA tails and activate host dsRNA sensors. Also plays a role in the inhibition of host type I interferon production by recruiting host OTULIN to promote removal of linear ubiquitination targeting host NEMO. This chain is Replicase polyprotein 1ab, found in Porcine reproductive and respiratory syndrome virus (PRRSV).